The primary structure comprises 421 residues: Putative zinc finger protein R05D3.3 (421 aa).

2 C2H2-type zinc fingers span residues 207–228 (VLCV…IEAH) and 234–257 (YKCS…RTQH). Positions 400–421 (GSSITDSNEPGPSEIKKELAEV) are disordered.

Its subcellular location is the nucleus. The sequence is that of Putative zinc finger protein R05D3.3 from Caenorhabditis elegans.